Consider the following 477-residue polypeptide: Inner membrane protein YbhI (477 aa).

At 1–5 (MNKKS) the chain is on the cytoplasmic side. The chain crosses the membrane as a helical span at residues 6–26 (LWKLILILAIPCIIGFMPAPA). Glycine 27 is a topological domain (periplasmic). The chain crosses the membrane as a helical span at residues 28-48 (LSELAWVLFGIYLAAIVGLVI). The Cytoplasmic portion of the chain corresponds to 49–50 (KP). A helical membrane pass occupies residues 51-71 (FPEPVVLLIAVAASMVVVGNL). Residues 72–87 (SDGAFKTTAVLSGYSS) lie on the Periplasmic side of the membrane. The helical transmembrane segment at 88-108 (GTTWLVFSAFTLSAAFVTTGL) threads the bilayer. At 109 to 148 (GKRIAYLLIGKIGNTTLGLGYVTVFLDLVLAPATPSNTAR) the chain is on the cytoplasmic side. A helical membrane pass occupies residues 149 to 169 (AGGIVLPIINSVAVALGSEPE). The Periplasmic portion of the chain corresponds to 170–219 (KSPRRVGHYLMMSIYMVTKTTSYMFFTAMAGNILALKMINDILHLQISWG). Residues 220 to 240 (GWALAAGLPGIIMLLVTPLVI) traverse the membrane as a helical segment. Residues 241 to 272 (YTMYPPEIKKVDNKTIAKAGLAELGPMKIREK) are Cytoplasmic-facing. A helical membrane pass occupies residues 273–293 (MLLGVFVLALLGWIFSKSLGV). Residues 294-297 (DEST) lie on the Periplasmic side of the membrane. A helical membrane pass occupies residues 298-318 (VAIVVMATMLLLGIVTWEDVV). Residues 319 to 356 (KNKGGWNTLIWYGGIIGLSSLLSKVKFFEWLAEVFKNN) are Cytoplasmic-facing. A helical membrane pass occupies residues 357-377 (LAFDGHGNVAFFVIIFLSIIV). Arginine 378 is a topological domain (periplasmic). The helical transmembrane segment at 379 to 399 (YFFASGSAYIVAMLPVFAMLA) threads the bilayer. Topologically, residues 400-445 (NVSGAPLMLTALALLFSNSYGGMVTHYGGAAGPVIFGVGYNDIKSW) are cytoplasmic. Residues 446–466 (WLVGAVLTILTFLVHITLGVW) form a helical membrane-spanning segment. The Periplasmic portion of the chain corresponds to 467–477 (WWNMLIGWNML).

It belongs to the SLC13A/DASS transporter (TC 2.A.47) family. DIT1 subfamily.

The protein resides in the cell inner membrane. This Escherichia coli (strain K12) protein is Inner membrane protein YbhI (ybhI).